The following is a 575-amino-acid chain: Potassium-transporting ATPase potassium-binding subunit (575 aa).

Helical transmembrane passes span 4-24 (SAWGLLALFLAALLVLAWPVG), 61-81 (LRYAIALLAFNAVGAVFVYAL), 133-153 (GLAVQNFFSAATGIAVAFALI), 180-200 (LWVLVPLSFVLAVFFVSQGVI), 258-278 (LANLLQMIAVFLIPAALCFAF), 289-309 (WAVLAAMTVMFVAAVMVVIPA), 344-364 (IDASALFAAVTTAASCGAVIA), 372-392 (LGGMVPMVLMQLGEVVFGGVG), 394-414 (GLYGMLIFAMLAVFIAGLMIG), 431-451 (LISIAILVTPVLVLAGTAVAV), 499-519 (LLGLAMWLGRFAVIVPVLAIA), and 545-565 (LLIGTVLLVGLLNYVPALALG).

It belongs to the KdpA family. The system is composed of three essential subunits: KdpA, KdpB and KdpC.

It localises to the cell inner membrane. Functionally, part of the high-affinity ATP-driven potassium transport (or Kdp) system, which catalyzes the hydrolysis of ATP coupled with the electrogenic transport of potassium into the cytoplasm. This subunit binds the periplasmic potassium ions and delivers the ions to the membrane domain of KdpB through an intramembrane tunnel. This chain is Potassium-transporting ATPase potassium-binding subunit, found in Variovorax paradoxus (strain S110).